A 274-amino-acid chain; its full sequence is Large ribosomal subunit protein uL2 (274 aa).

Disordered regions lie at residues 28 to 54 (APHAPLLEKKSKTGGRNNNGRITTRHI) and 224 to 274 (VAMN…RRRK). Residues 263 to 274 (KRTDKMIVRRRK) are compositionally biased toward basic and acidic residues.

Belongs to the universal ribosomal protein uL2 family. As to quaternary structure, part of the 50S ribosomal subunit. Forms a bridge to the 30S subunit in the 70S ribosome.

One of the primary rRNA binding proteins. Required for association of the 30S and 50S subunits to form the 70S ribosome, for tRNA binding and peptide bond formation. It has been suggested to have peptidyltransferase activity; this is somewhat controversial. Makes several contacts with the 16S rRNA in the 70S ribosome. This Pseudomonas fluorescens (strain SBW25) protein is Large ribosomal subunit protein uL2.